Consider the following 154-residue polypeptide: Snaclec EMS16 subunit beta (154 aa).

An N-terminal signal peptide occupies residues 1 to 26; it reads MGRLISVRFSLLVVFLSLSGIGAGLC. Cysteine 27 and cysteine 38 are disulfide-bonded. Residues 34 to 147 form the C-type lectin domain; sequence FDQHCYKVFE…CEKSVSFVCK (114 aa). A glycan (N-linked (GlcNAc...) asparagine) is linked at asparagine 47. 2 disulfides stabilise this stretch: cysteine 55-cysteine 146 and cysteine 121-cysteine 138.

This sequence belongs to the snaclec family. In terms of assembly, heterodimer of subunits A and B; disulfide-linked. In terms of tissue distribution, expressed by the venom gland.

The protein resides in the secreted. Its function is as follows. EMS16 is a potent and selective inhibitor of alpha-2/beta-1 (ITGA2/ITGB1) integrin and acts as a potent antagonist of platelet aggregation and cell migration. Binds specifically to the I domain of the alpha-2 subunit, in a metal ion-independent fashion. The sequence is that of Snaclec EMS16 subunit beta from Echis multisquamatus (Central Asian sand viper).